Consider the following 625-residue polypeptide: pH-response transcription factor pacC/RIM101 (625 aa).

The segment covering 1-34 (MSSQDQQQQQQPAQTQTSTSSSSNNENATTATSS) has biased composition (low complexity). The segment at 1 to 35 (MSSQDQQQQQQPAQTQTSTSSSSNNENATTATSSI) is disordered. 3 C2H2-type zinc fingers span residues 45–70 (LLCQ…CEKH), 81–105 (LTCG…IRVH), and 111–133 (HKCE…VKTH). The segment covering 391–416 (APMTATHSSHSVSSGTPALTPPSSSV) has biased composition (polar residues). The disordered stretch occupies residues 391–440 (APMTATHSSHSVSSGTPALTPPSSSVSYTSGNSPMSSSGMSPISRHSSTS). Residues 417-438 (SYTSGNSPMSSSGMSPISRHSS) show a composition bias toward low complexity. Positions 444–447 (YPNL) match the YPX[LI] motif 1 motif. 2 disordered regions span residues 455–543 (SPHH…SPSV) and 584–625 (VKDE…DDDE). Composition is skewed to polar residues over residues 461 to 472 (TAPTSTLGTNFD) and 490 to 514 (GLNS…SPKE). The short motif at 615–618 (YPVL) is the YPX[LI] motif 2 element.

It belongs to the pacC/RIM101 family. Post-translationally, activated by C-terminal proteolytic cleavage by signaling protease (probably palB/RIM13) at neutral to alkaline ambient pH.

The protein resides in the cytoplasm. It is found in the nucleus. In terms of biological role, transcription factor that mediates regulation of both acid- and alkaline-expressed genes in response to ambient pH. At alkaline ambient pH, activates transcription of alkaline-expressed genes (including pac1 itself) and represses transcription of acid-expressed genes. The polypeptide is pH-response transcription factor pacC/RIM101 (pac1) (Sclerotinia sclerotiorum (White mold)).